The chain runs to 394 residues: Fructose-bisphosphate aldolase, chloroplastic (394 aa).

A chloroplast-targeting transit peptide spans 1-46 (MASASLLKTSPVLDNPEFLKGQTLRIPSVAGVRFTPSGSSSLTVRA). Substrate is bound by residues R93 and K183. The active-site Proton acceptor is the E223. K265 (schiff-base intermediate with dihydroxyacetone-P) is an active-site residue.

Belongs to the class I fructose-bisphosphate aldolase family.

It is found in the plastid. The protein resides in the chloroplast. It carries out the reaction beta-D-fructose 1,6-bisphosphate = D-glyceraldehyde 3-phosphate + dihydroxyacetone phosphate. It participates in carbohydrate degradation; glycolysis; D-glyceraldehyde 3-phosphate and glycerone phosphate from D-glucose: step 4/4. The protein is Fructose-bisphosphate aldolase, chloroplastic of Spinacia oleracea (Spinach).